The sequence spans 387 residues: Putative purine permease 15 (387 aa).

The next 10 membrane-spanning stretches (helical) occupy residues 44 to 64, 84 to 104, 122 to 142, 150 to 169, 179 to 199, 210 to 230, 252 to 272, 306 to 326, 329 to 349, and 354 to 374; these read WVTIIICTILAVTGQCIARLL, TLLQVVGFPILLLPFLLHFLI, LAITYSILCIYMFCQAFFSDV, VFTLTYTTQLLFTLIFSKYY, FISLILAVLAGAFTLYTFSAG, YGIINVAFGAAIFFSLLLCII, FVVVLEMIIFLSLVVTIILVA, VAWQIYWVGIVGLVFAVSAVF, VISVCTWPIVSLLVAFLYNTH, and VFRGIALGAAALSVSCYIYII.

The protein belongs to the purine permeases (TC 2.A.7.14) family.

The protein resides in the membrane. In Arabidopsis thaliana (Mouse-ear cress), this protein is Putative purine permease 15 (PUP15).